A 312-amino-acid chain; its full sequence is DNA-directed RNA polymerase subunit alpha (312 aa).

The alpha N-terminal domain (alpha-NTD) stretch occupies residues 1 to 229 (MLQYQIDRIE…ELFQPLATVT (229 aa)). The interval 239–312 (EPTAEAQIPL…IQIPQSRTSA (74 aa)) is alpha C-terminal domain (alpha-CTD).

The protein belongs to the RNA polymerase alpha chain family. As to quaternary structure, in cyanobacteria the RNAP catalytic core is composed of 2 alpha, 1 beta, 1 beta', 1 gamma and 1 omega subunit. When a sigma factor is associated with the core the holoenzyme is formed, which can initiate transcription.

The catalysed reaction is RNA(n) + a ribonucleoside 5'-triphosphate = RNA(n+1) + diphosphate. In terms of biological role, DNA-dependent RNA polymerase catalyzes the transcription of DNA into RNA using the four ribonucleoside triphosphates as substrates. This chain is DNA-directed RNA polymerase subunit alpha, found in Synechococcus sp. (strain WH7803).